Reading from the N-terminus, the 359-residue chain is MAQRLTGEQTLDHYEDSTHASIFTYTNSNSTKGPFEGPNYHIAPRWVYHLTSTWMILVVVASVFTNGLVLAATMRFKKLRHPLNWILVNLAVADLAETIIASTISVVNQIYGYFVLGHPLCVIEGYIVSLCGITGLWSLAIISWERWLVVCKPFGNVRFDAKLATVGIVFSWVWAAIWTAPPIFGWSRYWPYGLKTSCGPDVFSGTSYPGVQSYMMVLMVTCCIFPLSIIVLCYLQVWLAIRAVAKQQKESESTQKAEKEVTRMVVVMVFAYCLCWGPYTFFACFATAHPGYAFHPLVASLPSYFAKSATIYNPIIYVFMNRQFRNCILHLFGKKVDDSSELSSTSKTEVSSVSSVSPA.

Over 1 to 47 the chain is Extracellular; the sequence is MAQRLTGEQTLDHYEDSTHASIFTYTNSNSTKGPFEGPNYHIAPRWV. The tract at residues 12 to 38 is required for 11-cis-retinal regeneration; that stretch reads DHYEDSTHASIFTYTNSNSTKGPFEGP. N-linked (GlcNAc...) asparagine glycosylation occurs at N29. A helical membrane pass occupies residues 48-72; sequence YHLTSTWMILVVVASVFTNGLVLAA. Over 73 to 84 the chain is Cytoplasmic; the sequence is TMRFKKLRHPLN. The helical transmembrane segment at 85–110 threads the bilayer; it reads WILVNLAVADLAETIIASTISVVNQI. The Extracellular segment spans residues 111–124; the sequence is YGYFVLGHPLCVIE. Residues C121 and C198 are joined by a disulfide bond. Residues 125-144 form a helical membrane-spanning segment; sequence GYIVSLCGITGLWSLAIISW. The Cytoplasmic segment spans residues 145–163; that stretch reads ERWLVVCKPFGNVRFDAKL. The helical transmembrane segment at 164-187 threads the bilayer; the sequence is ATVGIVFSWVWAAIWTAPPIFGWS. Over 188-213 the chain is Extracellular; sequence RYWPYGLKTSCGPDVFSGTSYPGVQS. Residues 214 to 241 traverse the membrane as a helical segment; it reads YMMVLMVTCCIFPLSIIVLCYLQVWLAI. Over 242–263 the chain is Cytoplasmic; that stretch reads RAVAKQQKESESTQKAEKEVTR. The helical transmembrane segment at 264 to 287 threads the bilayer; sequence MVVVMVFAYCLCWGPYTFFACFAT. At 288 to 295 the chain is on the extracellular side; that stretch reads AHPGYAFH. A helical transmembrane segment spans residues 296–320; it reads PLVASLPSYFAKSATIYNPIIYVFM. N6-(retinylidene)lysine is present on K307. Over 321–359 the chain is Cytoplasmic; it reads NRQFRNCILHLFGKKVDDSSELSSTSKTEVSSVSSVSPA.

It belongs to the G-protein coupled receptor 1 family. Opsin subfamily. In terms of assembly, monomer. Homodimer. Homotetramer. In terms of processing, N-glycosylated. O-glycosylated. Post-translationally, phosphorylated on some or all of the serine and threonine residues present in the C-terminal region. Expressed in retina (at protein level). Expressed in cone photoreceptor cells (at protein level).

Its subcellular location is the cell membrane. Functionally, visual pigments are the light-absorbing molecules that mediate vision. They consist of an apoprotein, opsin, covalently linked to cis-retinal. May increase spectral sensitivity in dim light. In Mus musculus (Mouse), this protein is Medium-wave-sensitive opsin 1 (Opn1mw).